The sequence spans 220 residues: U1 small nuclear ribonucleoprotein C (220 aa).

Residues 4-36 form a Matrin-type zinc finger; that stretch reads YYCDYCDIYLTHDSMNARKAHNSGRNHVANVRD. Pro residues-rich tracts occupy residues 88–130 and 147–165; these read PGPP…PFLP and PPFP…PFRP. Residues 88-220 form a disordered region; sequence PGPPPPGAFP…HPDRLRMLGQ (133 aa). A compositionally biased stretch (low complexity) spans 166-200; it reads PMGMGMPPAPAQAQAQGSPMGMPQQGQQGTFTPTQ. The span at 211 to 220 shows a compositional bias: basic and acidic residues; that stretch reads HPDRLRMLGQ.

The protein belongs to the U1 small nuclear ribonucleoprotein C family. As to quaternary structure, U1 snRNP is composed of the 7 core Sm proteins B/B', D1, D2, D3, E, F and G that assemble in a heptameric protein ring on the Sm site of the small nuclear RNA to form the core snRNP, and at least 3 U1 snRNP-specific proteins U1-70K, U1-A and U1-C. U1-C interacts with U1 snRNA and the 5' splice-site region of the pre-mRNA.

The protein resides in the nucleus. Its function is as follows. Component of the spliceosomal U1 snRNP, which is essential for recognition of the pre-mRNA 5' splice-site and the subsequent assembly of the spliceosome. U1-C is directly involved in initial 5' splice-site recognition for both constitutive and regulated alternative splicing. The interaction with the 5' splice-site seems to precede base-pairing between the pre-mRNA and the U1 snRNA. Stimulates commitment or early (E) complex formation by stabilizing the base pairing of the 5' end of the U1 snRNA and the 5' splice-site region. In Cryptococcus neoformans var. neoformans serotype D (strain JEC21 / ATCC MYA-565) (Filobasidiella neoformans), this protein is U1 small nuclear ribonucleoprotein C.